The primary structure comprises 337 residues: Tetraacyldisaccharide 4'-kinase (337 aa).

51–58 is an ATP binding site; the sequence is HVGGAGKT.

Belongs to the LpxK family.

The enzyme catalyses a lipid A disaccharide + ATP = a lipid IVA + ADP + H(+). The protein operates within glycolipid biosynthesis; lipid IV(A) biosynthesis; lipid IV(A) from (3R)-3-hydroxytetradecanoyl-[acyl-carrier-protein] and UDP-N-acetyl-alpha-D-glucosamine: step 6/6. Its function is as follows. Transfers the gamma-phosphate of ATP to the 4'-position of a tetraacyldisaccharide 1-phosphate intermediate (termed DS-1-P) to form tetraacyldisaccharide 1,4'-bis-phosphate (lipid IVA). The chain is Tetraacyldisaccharide 4'-kinase from Afipia carboxidovorans (strain ATCC 49405 / DSM 1227 / KCTC 32145 / OM5) (Oligotropha carboxidovorans).